The sequence spans 54 residues: ATP synthase F(0) complex subunit 8 (54 aa).

The helical transmembrane segment at 9–25 (WVFLFFLVWLVLGFLGL) threads the bilayer.

Belongs to the ATPase protein 8 family. Component of the ATP synthase complex composed at least of ATP5F1A/subunit alpha, ATP5F1B/subunit beta, ATP5MC1/subunit c (homooctomer), MT-ATP6/subunit a, MT-ATP8/subunit 8, ATP5ME/subunit e, ATP5MF/subunit f, ATP5MG/subunit g, ATP5MK/subunit k, ATP5MJ/subunit j, ATP5F1C/subunit gamma, ATP5F1D/subunit delta, ATP5F1E/subunit epsilon, ATP5PF/subunit F6, ATP5PB/subunit b, ATP5PD/subunit d, ATP5PO/subunit OSCP. ATP synthase complex consists of a soluble F(1) head domain (subunits alpha(3) and beta(3)) - the catalytic core - and a membrane F(0) domain - the membrane proton channel (subunits c, a, 8, e, f, g, k and j). These two domains are linked by a central stalk (subunits gamma, delta, and epsilon) rotating inside the F1 region and a stationary peripheral stalk (subunits F6, b, d, and OSCP).

It localises to the mitochondrion membrane. Its function is as follows. Subunit 8, of the mitochondrial membrane ATP synthase complex (F(1)F(0) ATP synthase or Complex V) that produces ATP from ADP in the presence of a proton gradient across the membrane which is generated by electron transport complexes of the respiratory chain. ATP synthase complex consist of a soluble F(1) head domain - the catalytic core - and a membrane F(1) domain - the membrane proton channel. These two domains are linked by a central stalk rotating inside the F(1) region and a stationary peripheral stalk. During catalysis, ATP synthesis in the catalytic domain of F(1) is coupled via a rotary mechanism of the central stalk subunits to proton translocation. In vivo, can only synthesize ATP although its ATP hydrolase activity can be activated artificially in vitro. Part of the complex F(0) domain. This chain is ATP synthase F(0) complex subunit 8, found in Branchiostoma lanceolatum (Common lancelet).